The primary structure comprises 363 residues: Phosphoserine aminotransferase (363 aa).

Residues serine 9 and arginine 42 each contribute to the L-glutamate site. Residues 76-77 (AR), tryptophan 102, threonine 154, aspartate 174, and glutamine 197 each bind pyridoxal 5'-phosphate. Residue lysine 198 is modified to N6-(pyridoxal phosphate)lysine. 240-241 (NT) is a binding site for pyridoxal 5'-phosphate.

This sequence belongs to the class-V pyridoxal-phosphate-dependent aminotransferase family. SerC subfamily. Homodimer. Requires pyridoxal 5'-phosphate as cofactor.

The protein resides in the cytoplasm. It catalyses the reaction O-phospho-L-serine + 2-oxoglutarate = 3-phosphooxypyruvate + L-glutamate. The enzyme catalyses 4-(phosphooxy)-L-threonine + 2-oxoglutarate = (R)-3-hydroxy-2-oxo-4-phosphooxybutanoate + L-glutamate. It functions in the pathway amino-acid biosynthesis; L-serine biosynthesis; L-serine from 3-phospho-D-glycerate: step 2/3. The protein operates within cofactor biosynthesis; pyridoxine 5'-phosphate biosynthesis; pyridoxine 5'-phosphate from D-erythrose 4-phosphate: step 3/5. In terms of biological role, catalyzes the reversible conversion of 3-phosphohydroxypyruvate to phosphoserine and of 3-hydroxy-2-oxo-4-phosphonooxybutanoate to phosphohydroxythreonine. This is Phosphoserine aminotransferase from Baumannia cicadellinicola subsp. Homalodisca coagulata.